The chain runs to 430 residues: Protein IQ-DOMAIN 3 (430 aa).

The interval methionine 1 to lysine 36 is disordered. Residues valine 9–glutamate 16 carry the Nuclear localization signal 1 motif. Positions glutamine 23–serine 35 are enriched in basic residues. Residues glutamate 107–arginine 135 form the IQ domain. The stretch at arginine 170–glutamate 224 forms a coiled coil. The interval methionine 213 to phenylalanine 231 is calmodulin-binding. Disordered regions lie at residues glutamate 271–valine 368 and serine 385–alanine 430. The span at alanine 286–serine 295 shows a compositional bias: low complexity. Positions serine 326–proline 340 are enriched in polar residues. Residues alanine 396 to serine 403 carry the Nuclear localization signal 2 motif.

The protein belongs to the IQD family. As to quaternary structure, binds to multiple calmodulin (CaM) in the presence of Ca(2+) and CaM-like proteins.

It is found in the nucleus. The protein localises to the nucleolus. The protein resides in the cytoplasm. It localises to the cytoskeleton. May be involved in cooperative interactions with calmodulins or calmodulin-like proteins. Recruits calmodulin proteins to microtubules, thus being a potential scaffold in cellular signaling and trafficking. May associate with nucleic acids and regulate gene expression at the transcriptional or post-transcriptional level. This Arabidopsis thaliana (Mouse-ear cress) protein is Protein IQ-DOMAIN 3.